The following is a 48-amino-acid chain: Small, acid-soluble spore protein P (48 aa).

Basic and acidic residues predominate over residues 1–12 (MTNKNTSKDMHK). The tract at residues 1–48 (MTNKNTSKDMHKNAPKGHNPGQPEPLSGSKKVKNRNHTRQKHNTSHDM) is disordered. Over residues 30-48 (KKVKNRNHTRQKHNTSHDM) the composition is skewed to basic residues.

Belongs to the SspP family.

Its subcellular location is the spore core. The sequence is that of Small, acid-soluble spore protein P from Bacillus velezensis (strain DSM 23117 / BGSC 10A6 / LMG 26770 / FZB42) (Bacillus amyloliquefaciens subsp. plantarum).